We begin with the raw amino-acid sequence, 47 residues long: PhoP/PhoQ regulator MgrB (47 aa).

The chain crosses the membrane as a helical span at residues 6–26 (WVALVVVVLACLLLWAQVFNM).

It belongs to the MgrB family. As to quaternary structure, may form homooligomers. Probably interacts with the periplasmic domain of PhoQ.

Its subcellular location is the cell inner membrane. In terms of biological role, phoP-regulated transcription is redox-sensitive, being activated when the periplasm becomes more reducing. MgrB acts between DsbA/DsbB and PhoP/PhoQ in this pathway. Represses PhoP/PhoQ signaling, possibly by binding to the periplasmic domain of PhoQ, altering its activity and that of downstream effector PhoP. This is PhoP/PhoQ regulator MgrB from Escherichia coli O1:K1 / APEC.